Consider the following 251-residue polypeptide: DNA repair protein RecO (251 aa).

This sequence belongs to the RecO family.

Its function is as follows. Involved in DNA repair and RecF pathway recombination. This is DNA repair protein RecO from Acidiphilium cryptum (strain JF-5).